The sequence spans 2312 residues: MGNQRNRVNLNPFRFWVFELREILREIKNYRYLGPFNSVGSFIHIFVHQERFLKLLDPRIWSVLRSQGSTGVVLFLVAVLIYRINNRNMIERKNIYLTGLLPIPTNFAGPRNETLEESFLSSNINRLIVSLLHLPKGKRLSESCFLDPKESTRVLPITKWRNWIGKRRDSSQLKGSSDQSRDHFDSIGTEDSEYHTLINQREIQQRKERSSLLDPSFLQTERTEIESDRFSKGLSGSSSKSRLFTEGEKEMNNHLPPEEIEEFLGNPTRSILSFFSDEWSELHLGSNPTERSTVDQKLLKKEQEVSFAPFRRSETKEIVNLFKTMAYLQKTVSIHPISSDPGCDMVPKDELDSEERFQEMADLFTLSITEPDLVYHKGFAFSIDSSVLDQKQFLAEARDESKKKSLLVLPPVFYQENESFYRRIRKRGVQISCGNDLEDPKPKIVVFASNNIVEAVNQYRWIRNLIQIQYSTHGYIRNVLNRFFLMNRSDRNFEYGIQRDQIGNDTLNHRTFMKYTINQHLSNLKKSQKKGSDPLILISRTERSVNRDPNAYRYKWSKGSKNFQEHLEHFVSEQKSRFQVVFDRYRSIRNRYRSRINQYSSDRSEVSDKKDNRYRSRINQYSSDRSEVSDKKNLAKFRSFVFSKLLLFLSNSLPFFFVSFGNTPPIQRSEIRVSELKGPNDRLCNQFLESIGLQLVYLKKLKPFLLDDHETSQKSKLLFNKKPEGMIDSFHTRNNRGKSLDSYFSMISHDQDNWLNPVKPFHRSSLISSFYKANRLRFLNNPHDFGFFCNKRFPFYVDIKNLDFTYGQFLNILFIRNTKFSLCGDKKKHAFLERDTISSIESQVSNLFKDFPQSGDERYNFYKYFHLAMRSDPLVRRAIYSIADISGTPLTEGQRVNFERTYCQPLSDMNLSDSEGKNLYQYLNFNSNMGLIYSEKCFSSEKRKKKKPEKRKEKKPEKRKEKKPEKRKEKKPEKRKEKKPEKRKEKKPEKRKEKKPEKRKEKKPEKRKEKKQSLYLKQWVEKVQMDRALQGERVSLILSNWNLFKTYVMPFSLTSTGYNLLKLMFLDTLGSYVMPLLRSSPKFVSICYAISDPCGISWRILQKKWCLLQWNWISAISNKCFHKLLLSEESIHRNNESPSMTDLRWPNLGEFLYSILFLLLVAGHLVFSHLLFFSQAFSELQRDFARAQSLMIPSYIVELRELLDMYPAPRSFKKLFLAAREKLVNYLRWGGGRKSFLIHLFELLNITPNPIDRIAFLKNTRHLSHTSKELYSLITELGDFSSLCSGQRYRYDQIIENVNGPCCLIDDKIESWISNCDAIEDKEREFLVPFCNFTRETRIDQILLSLTHSDHLSNNDSASQMSEEPGAFYLRHLVDIHKKGLMNYECNTSCLAERRIFLAHYQTITYSPCGDNRSHFPSHGKTFSLRLPLHPSRATLVIGSIGSGRSYLVKSLATNSYVPLITVVLNKFLKNWTPQGFDIHESGVYDEYGDDAEEANDYGASFFDFLDNDSDDYEDRDSDDYEPGASDDYEPGDMEDFVDSEMTEWLTKTNVPLVYQLLDDEIDEFYITLQFELAKAMSPCILWIPNIHDLDAKESDYLSLGLLVNHLSRDCGRRSTKNEILVIASTHIPQKVDPSLIGPDGLSTCIKTRRLLVPQQQQCLFTLSYTRGFHLENKMFHTHTNEFESTILGPSVPDLVALTNEALSISITQKKSIIDTTTIRYALHRKTWDLEADRNLSPAKEHGTLFYQVGRAFAHTVLLRNCPIDPISIYIKKNLCEAGDSSLYKWYFELGTSMKKLTILLYLLTCSAGSIAQDLLSPPGPDEQNLITSYGLVENDSDLVHGLSDIVHGLLELEGALVGSSPTEEEVEGTEEEVEGTEEEVEGTEEEVEGTEEEVEGTEEEVEGTEEEVEGTEDEEVEGTEEEVEGTEDEEVEGTEEEVEGTEEEVEGTEDEEGEGTEDEEVEGTEKDSSQFDNDRVTLLLRPKPRNPLDIQRLIYQHQKYESELEEDDDDDEDVFAPQKMLEDLFSELVWSPRIWHPWDFILDCEAEIPAEEIPEEEDPLPEEALETEVAVWGEEEEGEADDEEDERLEAQQEDELLEEEDEELKEEEDELHEEEEEEEEEEEEEDELHEEEEEEEEEEEDELQENDSEFFRSETQQPQARDGFSEEEGCFRISQFMWVPGDPLSFLYKDTPFVEVLSYPEEATEISKELLRLLNPKTKRDAPKRARQRWWTKKKQDKHYELVLDRQRWLITKSSLSKSNGFFRSNTPSESYQYLSNLFLSNRRLLDQMTKTFFRKKWLFPDEMKIGFMEQ.

Disordered regions lie at residues 170-191 (SSQL…GTED), 223-253 (TEIE…EMNN), and 942-1009 (KRKK…KRKE). Residues 232 to 242 (KGLSGSSSKSR) are compositionally biased toward low complexity. Basic and acidic residues-rich tracts occupy residues 243–252 (LFTEGEKEMN) and 950–1007 (KRKE…PEKR). 1439 to 1446 (GSIGSGRS) lines the ATP pocket. Disordered stretches follow at residues 1513 to 1532 (YEDR…YEPG), 1857 to 1983 (LVGS…LLRP), and 2050 to 2166 (PAEE…DGFS). A compositionally biased stretch (acidic residues) spans 1863 to 1963 (TEEEVEGTEE…GEGTEDEEVE (101 aa)). Basic and acidic residues predominate over residues 1964–1976 (GTEKDSSQFDNDR). Acidic residues-rich tracts occupy residues 2050–2067 (PAEE…EALE) and 2074–2149 (GEEE…ENDS).

This sequence belongs to the Ycf2 family.

Its subcellular location is the plastid. It localises to the chloroplast stroma. Its function is as follows. Probable ATPase of unknown function. Its presence in a non-photosynthetic plant (Epifagus virginiana) and experiments in tobacco indicate that it has an essential function which is probably not related to photosynthesis. The sequence is that of Protein Ycf2 from Oenothera parviflora (Small-flowered evening primrose).